Consider the following 547-residue polypeptide: CTP synthase (547 aa).

Positions 1–265 (MARFVFITGG…DQAVLDAFSI (265 aa)) are amidoligase domain. CTP is bound at residue Ser13. Ser13 serves as a coordination point for UTP. ATP is bound by residues 14-19 (SLGKGL) and Asp71. The Mg(2+) site is built by Asp71 and Glu139. Residues 146 to 148 (DIE), 186 to 191 (KTKPTQ), and Lys222 each bind CTP. Residues 186-191 (KTKPTQ) and Lys222 each bind UTP. Residues 291–546 (NVAIVGKYTQ…VRAAKEVSRL (256 aa)) form the Glutamine amidotransferase type-1 domain. An L-glutamine-binding site is contributed by Gly353. Cys380 serves as the catalytic Nucleophile; for glutamine hydrolysis. L-glutamine is bound by residues 381 to 384 (LGMQ), Glu404, and Arg474. Residues His519 and Glu521 contribute to the active site.

Belongs to the CTP synthase family. As to quaternary structure, homotetramer.

The enzyme catalyses UTP + L-glutamine + ATP + H2O = CTP + L-glutamate + ADP + phosphate + 2 H(+). The catalysed reaction is L-glutamine + H2O = L-glutamate + NH4(+). It catalyses the reaction UTP + NH4(+) + ATP = CTP + ADP + phosphate + 2 H(+). Its pathway is pyrimidine metabolism; CTP biosynthesis via de novo pathway; CTP from UDP: step 2/2. Its activity is regulated as follows. Allosterically activated by GTP, when glutamine is the substrate; GTP has no effect on the reaction when ammonia is the substrate. The allosteric effector GTP functions by stabilizing the protein conformation that binds the tetrahedral intermediate(s) formed during glutamine hydrolysis. Inhibited by the product CTP, via allosteric rather than competitive inhibition. In terms of biological role, catalyzes the ATP-dependent amination of UTP to CTP with either L-glutamine or ammonia as the source of nitrogen. Regulates intracellular CTP levels through interactions with the four ribonucleotide triphosphates. The sequence is that of CTP synthase from Dinoroseobacter shibae (strain DSM 16493 / NCIMB 14021 / DFL 12).